The sequence spans 115 residues: UPF0342 protein Bsph_0375 (115 aa).

This sequence belongs to the UPF0342 family.

In Lysinibacillus sphaericus (strain C3-41), this protein is UPF0342 protein Bsph_0375.